The chain runs to 1685 residues: Phosphatidylinositol 4-phosphate 3-kinase C2 domain-containing subunit alpha (1685 aa).

Disordered stretches follow at residues 1–33 (MAQI…EALQ) and 41–60 (KLQK…LSSS). An N-acetylalanine modification is found at A2. The interval 2-142 (AQISSNSGFK…FRPTIQRGQW (141 aa)) is interaction with clathrin; sufficient to induce clathrin assembly. Over residues 19 to 31 (EPTRAKDVDKEEA) the composition is skewed to basic and acidic residues. The segment covering 49–60 (TDNQRGFELSSS) has biased composition (polar residues). A phosphoserine mark is found at S60, S108, S259, S327, and S338. The 89-residue stretch at 419–507 (NASVKVSIDI…DTEIRLQLLT (89 aa)) folds into the PI3K-RBD domain. A Phosphoserine modification is found at S628. The C2 PI3K-type domain occupies 680-839 (TTEQLQFTIF…ERIVLQVDFP (160 aa)). The 177-residue stretch at 859–1035 (QHNLETLEND…EHVLGALLSV (177 aa)) folds into the PIK helical domain. In terms of domain architecture, PI3K/PI4K catalytic spans 1103–1381 (SIKSCSFFSS…LIESSLGSIA (279 aa)). A G-loop region spans residues 1109 to 1115 (FFSSNAV). Residues 1245 to 1253 (GICDRHNDN) form a catalytic loop region. Residues 1264-1290 (HIDFGKFLGHAQMFGTFKRDRAPFVLT) form an activation loop region. The PX domain occupies 1420–1536 (GRIKEVSVFT…TFFHPLLRDE (117 aa)). Residues 1486 to 1491 (RMVLGR) form an interaction with PtdIns(4,5)P2-containing membranes region. S1551 is subject to Phosphoserine. The 124-residue stretch at 1554-1677 (TPGQIGGAVK…NLSKETVKWY (124 aa)) folds into the C2 domain. The short motif at 1607–1618 (SKRKTKISRKTR) is the Nuclear localization signal element.

It belongs to the PI3/PI4-kinase family. As to quaternary structure, part of a complex with ERBB2 and EGFR. Interacts with clathrin trimers. Interacts with SBF2/MTMR13. Ca(2+) is required as a cofactor. It depends on Mg(2+) as a cofactor. Post-translationally, phosphorylated on Ser-259 during mitosis and upon UV irradiation; which does not change enzymatic activity but leads to proteasomal degradation. Phosphorylated upon insulin stimulation; which may lead to enzyme activation.

It localises to the cell membrane. The protein resides in the cytoplasmic vesicle. It is found in the clathrin-coated vesicle. Its subcellular location is the nucleus. The protein localises to the cytoplasm. It localises to the golgi apparatus. The protein resides in the trans-Golgi network. It catalyses the reaction a 1,2-diacyl-sn-glycero-3-phospho-(1D-myo-inositol 4-phosphate) + ATP = a 1,2-diacyl-sn-glycero-3-phospho-(1D-myo-inositol-3,4-bisphosphate) + ADP + H(+). The catalysed reaction is a 1,2-diacyl-sn-glycero-3-phospho-(1D-myo-inositol) + ATP = a 1,2-diacyl-sn-glycero-3-phospho-(1D-myo-inositol-3-phosphate) + ADP + H(+). The enzyme catalyses a 1,2-diacyl-sn-glycero-3-phospho-(1D-myo-inositol-4,5-bisphosphate) + ATP = a 1,2-diacyl-sn-glycero-3-phospho-(1D-myo-inositol-3,4,5-trisphosphate) + ADP + H(+). Only slightly inhibited by wortmannin and LY294002. Activated by clathrin and insulin. Functionally, generates phosphatidylinositol 3-phosphate (PtdIns3P) and phosphatidylinositol 3,4-bisphosphate (PtdIns(3,4)P2) that act as second messengers. Has a role in several intracellular trafficking events. Functions in insulin signaling and secretion. Required for translocation of the glucose transporter SLC2A4/GLUT4 to the plasma membrane and glucose uptake in response to insulin-mediated RHOQ activation. Regulates insulin secretion through two different mechanisms: involved in glucose-induced insulin secretion downstream of insulin receptor in a pathway that involves AKT1 activation and TBC1D4/AS160 phosphorylation, and participates in the late step of insulin granule exocytosis probably in insulin granule fusion. Synthesizes PtdIns3P in response to insulin signaling. Functions in clathrin-coated endocytic vesicle formation and distribution. Regulates dynamin-independent endocytosis, probably by recruiting EEA1 to internalizing vesicles. In neurosecretory cells synthesizes PtdIns3P on large dense core vesicles. Participates in calcium induced contraction of vascular smooth muscle by regulating myosin light chain (MLC) phosphorylation through a mechanism involving Rho kinase-dependent phosphorylation of the MLCP-regulatory subunit MYPT1. May play a role in the EGF signaling cascade. May be involved in mitosis and UV-induced damage response. Required for maintenance of normal renal structure and function by supporting normal podocyte function. Involved in the regulation of ciliogenesis and trafficking of ciliary components. In Pongo abelii (Sumatran orangutan), this protein is Phosphatidylinositol 4-phosphate 3-kinase C2 domain-containing subunit alpha (PIK3C2A).